The chain runs to 3210 residues: PF 1022-synthetase (3210 aa).

The interval 68–454 (VDDRRHAIGH…VKELDVVTAE (387 aa)) is condensation 1. The segment at 483-876 (AGDPNKAAVF…GRKDSQVKIR (394 aa)) is adenylation 1. One can recognise a Carrier 1 domain in the interval 1010–1086 (APATGIEVKL…GLVDVIGRDP (77 aa)). An O-(pantetheine 4'-phosphoryl)serine modification is found at Ser1047. The segment at 1104 to 1534 (SFAQGRLWFL…RTPIAVLPLT (431 aa)) is condensation 2. The tract at residues 1563–2023 (FRKQVAAHPH…GRMDQQVKIR (461 aa)) is adenylation 2. Residues 2081 to 2236 (EGWKDFFESN…YLLEVVESLV (156 aa)) are S-adenosyl-L-methionine-dependent N-methyltransferase. Carrier domains are found at residues 2570-2644 (DPFV…RQGL) and 2668-2742 (TPSD…RLTQ). O-(pantetheine 4'-phosphoryl)serine occurs at positions 2604 and 2702. The condensation 3 stretch occupies residues 2788–3203 (LDVYPATQMQ…KRMLEELCGN (416 aa)). The disordered stretch occupies residues 2976 to 3002 (VIKGNNNTTPPPPPQQQSTPSGAHHAS).

It belongs to the NRP synthetase family. Requires pantetheine 4'-phosphate as cofactor.

It carries out the reaction 2 (R)-3-phenyllactate + 2 (R)-lactate + 4 L-leucine + 4 S-adenosyl-L-methionine + 8 ATP = PF1022A + 8 AMP + 4 S-adenosyl-L-homocysteine + 8 diphosphate + 8 H(+). The catalysed reaction is 4 (R)-3-phenyllactate + 4 L-leucine + 4 S-adenosyl-L-methionine + 8 ATP = PF1022B + 8 AMP + 4 S-adenosyl-L-homocysteine + 8 diphosphate + 8 H(+). It catalyses the reaction 3 (R)-3-phenyllactate + (R)-lactate + 4 L-leucine + 4 S-adenosyl-L-methionine + 8 ATP = PF1022C + 8 AMP + 4 S-adenosyl-L-homocysteine + 8 diphosphate + 8 H(+). The enzyme catalyses (R)-3-phenyllactate + 3 (R)-lactate + 4 L-leucine + 4 S-adenosyl-L-methionine + 8 ATP = PF1022D + 8 AMP + 4 S-adenosyl-L-homocysteine + 8 diphosphate + 8 H(+). It carries out the reaction 4 (R)-lactate + 4 L-leucine + 4 S-adenosyl-L-methionine + 8 ATP = PF1022F + 8 AMP + 4 S-adenosyl-L-homocysteine + 8 diphosphate + 8 H(+). In terms of biological role, nonribosomal peptide synthetase that synthesizes cyclooctadepsipeptides (CODPs) PF 1022 that show powerful broad-spectrum anthelmintic activity with low toxicity in animals. Couples 4 N-methyl-L-leucines and a varying content of alpha-D-hydroxy acids (D-lactates or D-phenyllactates) in an alternative fashion. The enzyme is capable of synthesizing all known natural cyclooctadepsipeptides of the PF1022 type differing in the content of D-lactate and D-phenyllactate, using from 4 D-lactates (PF 1022F) to 4 D-phenyllactates (PF 1022B), respectively. The formation of different PF-related compounds is mainly controlled by the molar ratio of the hydroxy acids. N-methylation of the substrate L-leucine takes place after covalent binding prior to peptide bond formation. The chain is PF 1022-synthetase from Rosellinia sp. (Mycelia sterilia).